The following is a 463-amino-acid chain: Fumarate hydratase class II (463 aa).

Residues 97-99, 128-131, 138-140, and T186 contribute to the substrate site; these read SGT, HPND, and SSN. The active-site Proton donor/acceptor is the H187. S317 is an active-site residue. Substrate is bound by residues S318 and 323-325; that span reads KVN.

Belongs to the class-II fumarase/aspartase family. Fumarase subfamily. As to quaternary structure, homotetramer.

It is found in the cytoplasm. The catalysed reaction is (S)-malate = fumarate + H2O. It participates in carbohydrate metabolism; tricarboxylic acid cycle; (S)-malate from fumarate: step 1/1. Involved in the TCA cycle. Catalyzes the stereospecific interconversion of fumarate to L-malate. The chain is Fumarate hydratase class II from Helicobacter pylori (strain J99 / ATCC 700824) (Campylobacter pylori J99).